The primary structure comprises 683 residues: Probable serine/threonine-protein kinase HAL5-like (683 aa).

Disordered stretches follow at residues methionine 1 to glutamate 90 and tyrosine 157 to alanine 200. Positions proline 36 to serine 48 are enriched in low complexity. The segment covering alanine 50–glycine 60 has biased composition (gly residues). A compositionally biased stretch (polar residues) spans serine 69 to serine 85. In terms of domain architecture, Protein kinase spans glycine 364–methionine 670. ATP is bound by residues isoleucine 370–valine 378 and lysine 411. Residue aspartate 521 is the Proton acceptor of the active site.

It belongs to the protein kinase superfamily. CAMK Ser/Thr protein kinase family. NPR/HAL subfamily. HAL5 sub-subfamily.

The catalysed reaction is L-seryl-[protein] + ATP = O-phospho-L-seryl-[protein] + ADP + H(+). The enzyme catalyses L-threonyl-[protein] + ATP = O-phospho-L-threonyl-[protein] + ADP + H(+). The sequence is that of Probable serine/threonine-protein kinase HAL5-like from Eremothecium gossypii (strain ATCC 10895 / CBS 109.51 / FGSC 9923 / NRRL Y-1056) (Yeast).